The following is a 251-amino-acid chain: MHISPDQLIFWEYGFVKLNGTIIYTWLLMLLLAVGSKTITKRLSRGEERSRWQNLLEVIIITIQKQISEVGLRQPRTYLPFLGTLFVFVAVANLFAVFPGYEPPTGSLSTTVALAICVFVAVPFYGIREQGLRRYLQSYLKPVPLLLPFNILGEFTRTLALAVRLFGNMMSGTMILAIMLIITPFIFPVVMGVLHLLIGGVQAYIFSILATVYIAAATSDNGENAGASDDEGGEDAKSACAAGGKICKHKP.

5 consecutive transmembrane segments (helical) span residues 14 to 34 (GFVK…LLAV), 78 to 98 (YLPF…FAVF), 107 to 127 (SLST…FYGI), 174 to 194 (MILA…MGVL), and 196 to 216 (LLIG…YIAA). A disordered region spans residues 224-251 (NAGASDDEGGEDAKSACAAGGKICKHKP).

Belongs to the ATPase A chain family. F-type ATPases have 2 components, CF(1) - the catalytic core - and CF(0) - the membrane proton channel. CF(1) has five subunits: alpha(3), beta(3), gamma(1), delta(1), epsilon(1). CF(0) has three main subunits: a(1), b(2) and c(9-12). The alpha and beta chains form an alternating ring which encloses part of the gamma chain. CF(1) is attached to CF(0) by a central stalk formed by the gamma and epsilon chains, while a peripheral stalk is formed by the delta and b chains.

It is found in the cell inner membrane. Functionally, key component of the proton channel; it plays a direct role in the translocation of protons across the membrane. In Nitrosospira multiformis (strain ATCC 25196 / NCIMB 11849 / C 71), this protein is ATP synthase subunit a.